Reading from the N-terminus, the 204-residue chain is MATEQEAEVGTETSSVSGRFLRNRDLYLFLPFLLGFSDQESSNGDDDDVASSRERIILVNPFTQGMIVLEGSSGMNPLLRSLLESREEGRPPASKASIDAMPIVEIDGCEGECVICLEEWKSEETVKEMPCKHRFHGGCIEKWLGFHGSCPVCRYEMPVDGDEIGKKRNDGNEIWVRFSFNDGRRIRDFSAQDGGNSDGVESEN.

An RING-type; atypical zinc finger spans residues 113–154; it reads CVICLEEWKSEETVKEMPCKHRFHGGCIEKWLGFHGSCPVCR.

Post-translationally, autoubiquitinated.

Its subcellular location is the cytoplasm. The enzyme catalyses S-ubiquitinyl-[E2 ubiquitin-conjugating enzyme]-L-cysteine + [acceptor protein]-L-lysine = [E2 ubiquitin-conjugating enzyme]-L-cysteine + N(6)-ubiquitinyl-[acceptor protein]-L-lysine.. Functionally, E3 ubiquitin-protein ligase involved in protein quality control (PQC) under proteotoxic stress. Is essential to plant survival under proteotoxic stress. Functions by removing damaged proteins before they form cytotoxic aggregates. Recognizes misfolded proteins selectively and tethers polyubiquitin chains to the proteins directly for subsequent degradation by the 26S proteasome pathway. Targets misfolded proteins independently of cytoplasmic chaperones. Associates with the 26S proteasome and sustains the structural integrity of the proteasome complex at the initial stage of proteotoxic stress. Under normal conditions, MPSR1 becomes highly unstable by its autoubiquitination activity and is stabilized during proteotoxic stress by conjugating ubiquitins on misfolded proteins. This Arabidopsis thaliana (Mouse-ear cress) protein is E3 ubiquitin-protein ligase MPSR1.